Reading from the N-terminus, the 402-residue chain is Renin (402 aa).

A signal peptide spans 1–26 (MGGRRMPLWALLLLWTSCSFSLPTDT). Positions 27–64 (ASFGRILLKKMPSVREILEERGVDMTRISAEWGEFIKK) are cleaved as a propeptide — activation peptide. Asn-69 carries an N-linked (GlcNAc...) asparagine glycan. The Peptidase A1 domain maps to 84–399 (YYGEIGIGTP…DRHNNRIGFA (316 aa)). Residue Asp-102 is part of the active site. The cysteines at positions 115 and 122 are disulfide-linked. Asn-139 carries an N-linked (GlcNAc...) asparagine glycan. Cysteines 278 and 282 form a disulfide. Asp-287 is a catalytic residue. N-linked (GlcNAc...) asparagine glycosylation is present at Asn-320. Cys-321 and Cys-358 form a disulfide bridge.

This sequence belongs to the peptidase A1 family. In terms of assembly, interacts with ATP6AP2.

It localises to the secreted. It is found in the membrane. It catalyses the reaction Cleavage of Leu-|-Xaa bond in angiotensinogen to generate angiotensin I.. Interaction with ATP6AP2 results in a 5-fold increased efficiency in angiotensinogen processing. Renin is a highly specific endopeptidase, whose only known function is to generate angiotensin I from angiotensinogen in the plasma, initiating a cascade of reactions that produce an elevation of blood pressure and increased sodium retention by the kidney. This chain is Renin (Ren1), found in Rattus norvegicus (Rat).